The following is a 59-amino-acid chain: MIEVSSMERVYQCLRCGLTFRTKKQLIRHLVNTEKVNPLSIDYYYQSFSVSLKDVNKII.

The segment at 11-33 (YQCLRCGLTFRTKKQLIRHLVNT) adopts a C2H2-type; degenerate zinc-finger fold.

This chain is Putative zinc finger protein ORF59a, found in Acidianus hospitalis (AFV-1).